Reading from the N-terminus, the 1400-residue chain is DNA-directed RNA polymerase subunit beta' (1400 aa).

Zn(2+) contacts are provided by Cys-70, Cys-72, Cys-85, and Cys-88. The Mg(2+) site is built by Asp-460, Asp-462, and Asp-464. Residues Cys-814, Cys-888, Cys-895, and Cys-898 each contribute to the Zn(2+) site.

Belongs to the RNA polymerase beta' chain family. In terms of assembly, the RNAP catalytic core consists of 2 alpha, 1 beta, 1 beta' and 1 omega subunit. When a sigma factor is associated with the core the holoenzyme is formed, which can initiate transcription. It depends on Mg(2+) as a cofactor. Zn(2+) serves as cofactor.

The catalysed reaction is RNA(n) + a ribonucleoside 5'-triphosphate = RNA(n+1) + diphosphate. Functionally, DNA-dependent RNA polymerase catalyzes the transcription of DNA into RNA using the four ribonucleoside triphosphates as substrates. The protein is DNA-directed RNA polymerase subunit beta' of Methylococcus capsulatus (strain ATCC 33009 / NCIMB 11132 / Bath).